Consider the following 190-residue polypeptide: Xanthine phosphoribosyltransferase 1 (190 aa).

2 residues coordinate xanthine: Leu20 and Asn27. Residue 129–133 (AQGCA) participates in 5-phospho-alpha-D-ribose 1-diphosphate binding. Lys157 lines the xanthine pocket.

Belongs to the purine/pyrimidine phosphoribosyltransferase family. Xpt subfamily. As to quaternary structure, homodimer.

Its subcellular location is the cytoplasm. It carries out the reaction XMP + diphosphate = xanthine + 5-phospho-alpha-D-ribose 1-diphosphate. It functions in the pathway purine metabolism; XMP biosynthesis via salvage pathway; XMP from xanthine: step 1/1. Converts the preformed base xanthine, a product of nucleic acid breakdown, to xanthosine 5'-monophosphate (XMP), so it can be reused for RNA or DNA synthesis. The polypeptide is Xanthine phosphoribosyltransferase 1 (Clostridium perfringens (strain ATCC 13124 / DSM 756 / JCM 1290 / NCIMB 6125 / NCTC 8237 / Type A)).